The primary structure comprises 129 residues: Natriuretic peptides B (129 aa).

Residues 1-26 (MDPQKALSRTLLLLLFLHLSLLGCRS) form the signal peptide. C107 and C123 are joined by a disulfide.

This sequence belongs to the natriuretic peptide family. In terms of processing, the precursor molecule is proteolytically cleaved, possibly by FURIN or CORIN, to produce the active peptide. May undergo further proteolytic cleavage by various proteases such as DPP4, MME and possibly FAP, to give rise to a variety of shorter peptides. May be cleaved at Pro-99 by the prolyl endopeptidase FAP (seprase) activity (in vitro). May be degraded by IDE. During IDE degradation, the resulting products initially increase the activation of NPR1 and can also stimulate NPR2 to produce cGMP before the fragments are completely degraded and inactivated by IDE (in vitro).

The protein resides in the secreted. Functionally, cardiac hormone that plays a key role in mediating cardio-renal homeostasis. May also function as a paracrine antifibrotic factor in the heart. Acts by specifically binding and stimulating NPR1 to produce cGMP, which in turn activates effector proteins that drive various biological responses. Involved in regulating the extracellular fluid volume and maintaining the fluid-electrolyte balance through natriuresis, diuresis, vasorelaxation, and inhibition of renin and aldosterone secretion. Binds the clearance receptor NPR3. The protein is Natriuretic peptides B (NPPB) of Ovis aries (Sheep).